The following is a 195-amino-acid chain: ATP-dependent Clp protease proteolytic subunit (195 aa).

S98 serves as the catalytic Nucleophile. Residue H123 is part of the active site.

This sequence belongs to the peptidase S14 family. Fourteen ClpP subunits assemble into 2 heptameric rings which stack back to back to give a disk-like structure with a central cavity, resembling the structure of eukaryotic proteasomes.

It localises to the cytoplasm. It carries out the reaction Hydrolysis of proteins to small peptides in the presence of ATP and magnesium. alpha-casein is the usual test substrate. In the absence of ATP, only oligopeptides shorter than five residues are hydrolyzed (such as succinyl-Leu-Tyr-|-NHMec, and Leu-Tyr-Leu-|-Tyr-Trp, in which cleavage of the -Tyr-|-Leu- and -Tyr-|-Trp bonds also occurs).. Functionally, cleaves peptides in various proteins in a process that requires ATP hydrolysis. Has a chymotrypsin-like activity. Plays a major role in the degradation of misfolded proteins. The protein is ATP-dependent Clp protease proteolytic subunit of Caldanaerobacter subterraneus subsp. tengcongensis (strain DSM 15242 / JCM 11007 / NBRC 100824 / MB4) (Thermoanaerobacter tengcongensis).